Reading from the N-terminus, the 121-residue chain is Small ribosomal subunit protein uS13 (121 aa).

Positions 94-121 are disordered; it reads GLPVRGQKTRNNAHTVKGKPKAIAGKKK. The segment covering 109 to 121 has biased composition (basic residues); the sequence is VKGKPKAIAGKKK.

It belongs to the universal ribosomal protein uS13 family. As to quaternary structure, part of the 30S ribosomal subunit. Forms a loose heterodimer with protein S19. Forms two bridges to the 50S subunit in the 70S ribosome.

Located at the top of the head of the 30S subunit, it contacts several helices of the 16S rRNA. In the 70S ribosome it contacts the 23S rRNA (bridge B1a) and protein L5 of the 50S subunit (bridge B1b), connecting the 2 subunits; these bridges are implicated in subunit movement. Contacts the tRNAs in the A and P-sites. This Onion yellows phytoplasma (strain OY-M) protein is Small ribosomal subunit protein uS13.